Here is a 99-residue protein sequence, read N- to C-terminus: Large ribosomal subunit protein uL23 (99 aa).

This sequence belongs to the universal ribosomal protein uL23 family. As to quaternary structure, part of the 50S ribosomal subunit. Contacts protein L29, and trigger factor when it is bound to the ribosome.

In terms of biological role, one of the early assembly proteins it binds 23S rRNA. One of the proteins that surrounds the polypeptide exit tunnel on the outside of the ribosome. Forms the main docking site for trigger factor binding to the ribosome. In Hydrogenobaculum sp. (strain Y04AAS1), this protein is Large ribosomal subunit protein uL23.